A 514-amino-acid chain; its full sequence is Maturase K (514 aa).

It belongs to the intron maturase 2 family. MatK subfamily.

The protein resides in the plastid. Its subcellular location is the chloroplast. Usually encoded in the trnK tRNA gene intron. Probably assists in splicing its own and other chloroplast group II introns. In Plantago argentea (Silver plantain), this protein is Maturase K.